A 521-amino-acid chain; its full sequence is Occludin (521 aa).

The disordered stretch occupies residues 1–20; it reads MSVRPFESPPPYRPDEFKPN. The Cytoplasmic segment spans residues 1 to 66; it reads MSVRPFESPP…KWTSPPGVIR (66 aa). The 208-residue stretch at 60–267 folds into the MARVEL domain; it reads SPPGVIRILS…IIFFAVKTRR (208 aa). Residues 67 to 89 form a helical membrane-spanning segment; that stretch reads ILSMLIIVMCIAIFACVASTLAW. The Extracellular portion of the chain corresponds to 90–133; that stretch reads DRGYGTGLFGGSLNYPYSGFGYGGGYGGGYGGYGYGYGGYTDPR. A helical membrane pass occupies residues 134–158; it reads AAKGFLLAMAAFCFIASLVIFVTSV. At 159 to 168 the chain is on the cytoplasmic side; sequence IRSGMSRTRR. The chain crosses the membrane as a helical span at residues 169–193; the sequence is YYLIVIIVSAILGIMVFIATIVYIM. Over 194–241 the chain is Extracellular; the sequence is GVNPTAQASGSMYGSQIYMICNQFYTPGGTGLYVDQYLYHYCVVDPQE. A disulfide bridge connects residues C214 and C235. Residues 242 to 263 form a helical membrane-spanning segment; that stretch reads AIAIVLGFMIIVAFALIIFFAV. The Cytoplasmic portion of the chain corresponds to 264–521; the sequence is KTRRKMDRYD…MVGDYDRRKP (258 aa). Residue S300 is modified to Phosphoserine. The disordered stretch occupies residues 300 to 329; the sequence is SAGTQDMPPPPSDYAERVDSPMAYSSNGKV. T303 carries the phosphothreonine modification. Residues S311 and S319 each carry the phosphoserine modification. Phosphoserine; by PKC; in vitro is present on S338. S358 is modified (phosphoserine). Residues 361-405 are disordered; that stretch reads DFRQPRYSSNGNLETPSKRAPTKGKAGKGKRTDPDHYETDYTTGG. Residues 366–375 show a composition bias toward polar residues; the sequence is RYSSNGNLET. Y367 carries the post-translational modification Phosphotyrosine. Phosphoserine is present on residues S368 and S369. Positions 380-389 are enriched in basic residues; that stretch reads APTKGKAGKG. Residues 390–399 are compositionally biased toward basic and acidic residues; it reads KRTDPDHYET. A phosphotyrosine mark is found at Y397 and Y401. T402 is modified (phosphothreonine; by PKC/PRKCH). A Phosphothreonine modification is found at T403. At S407 the chain carries Phosphoserine. The OCEL domain maps to 413 to 521; the sequence is EDWVREYPPI…MVGDYDRRKP (109 aa). Positions 424-488 form a coiled coil; the sequence is SDQQRQLYKR…EYNRLKQVKG (65 aa). S489 is subject to Phosphoserine.

This sequence belongs to the ELL/occludin family. As to quaternary structure, interacts with TJP1/ZO1. Interacts with VAPA. Interacts with CLDN1, CLDN6, CLDN9, CLDN11, CLDN12 and CLDN17. Interacts with PLSCR1. Interacts with LSR, ILDR1 and ILDR2. Interacts with TJP2/ZO2. In terms of processing, dephosphorylated by PTPRJ. May be phosphorylated by PKC during translocation to cell-cell contacts. In terms of tissue distribution, localized at tight junctions of both epithelial and endothelial cells. Highly expressed in the testis, kidney, lung, liver and brain. Not detected in skeletal muscle, spleen and heart.

The protein localises to the cell membrane. It is found in the cell junction. The protein resides in the tight junction. In terms of biological role, may play a role in the formation and regulation of the tight junction (TJ) paracellular permeability barrier. The chain is Occludin (Ocln) from Mus musculus (Mouse).